The following is a 407-amino-acid chain: NADH dehydrogenase [ubiquinone] 1 alpha subcomplex subunit 10, mitochondrial (407 aa).

A mitochondrion-targeting transit peptide spans 1–60 (MTAVFRVGLVRLVSRATQSPNLLQAQTNALPAAFQQRCSISGKTMRGGPRVPKAAPYPYK).

This sequence belongs to the complex I NDUFA10 subunit family. As to quaternary structure, complex I is composed of 45 different subunits. This a component of the hydrophobic protein fraction. Forms a complex including sicily, ND-42 and Hsp83; the complex is necessary to chaperone ND-42 in the cytoplasm before mitochondrial import; the interaction between sicily and ND-42 is direct and occurs preferably between the unprocessed forms in the cytoplasm. FAD is required as a cofactor. Expressed in muscles (at protein level).

It is found in the mitochondrion matrix. The protein localises to the cytoplasm. Functionally, accessory subunit of the mitochondrial membrane respiratory chain NADH dehydrogenase (Complex I), that is believed not to be involved in catalysis. Complex I functions in the transfer of electrons from NADH to the respiratory chain. The immediate electron acceptor for the enzyme is believed to be ubiquinone. The protein is NADH dehydrogenase [ubiquinone] 1 alpha subcomplex subunit 10, mitochondrial of Drosophila melanogaster (Fruit fly).